The primary structure comprises 81 residues: MKTLLLTLVVVTIVCLDLGYTLKCNKLVPLFYKTCPAGKNLCYKMFMVSNKMVPVKRGCIDVCPKNSALVKYVCCNTDRCN.

Positions 1–21 (MKTLLLTLVVVTIVCLDLGYT) are cleaved as a signal peptide. 4 disulfide bridges follow: cysteine 24–cysteine 42, cysteine 35–cysteine 59, cysteine 63–cysteine 74, and cysteine 75–cysteine 80.

Belongs to the three-finger toxin family. Short-chain subfamily. Type IA cytotoxin sub-subfamily. As to quaternary structure, monomer in solution; Homodimer and oligomer in the presence of negatively charged lipids forming a pore with a size ranging between 20 and 30 Angstroms. Expressed by the venom gland.

It is found in the secreted. The protein resides in the target cell membrane. In terms of biological role, shows cytolytic activity on many different cells by forming pore in lipid membranes. In vivo, increases heart rate or kills the animal by cardiac arrest. In addition, it binds to heparin with high affinity, interacts with Kv channel-interacting protein 1 (KCNIP1) in a calcium-independent manner, and binds to integrin alpha-V/beta-3 (ITGAV/ITGB3) with moderate affinity. The protein is Cytotoxin 5 of Naja atra (Chinese cobra).